Here is an 80-residue protein sequence, read N- to C-terminus: Toxin Acra I-2 (80 aa).

A signal peptide spans 1-22 (MMKLALFSIIVILFSLIGSIHG). The 56-residue stretch at 25 to 80 (VPGNYPLDSSGNKYPCTVLGDNQSCIDVCKKHGVKYGYCYSFKCWCEFLEDKNVSI) folds into the LCN-type CS-alpha/beta domain. Cystine bridges form between cysteine 40–cysteine 63, cysteine 49–cysteine 68, and cysteine 53–cysteine 70.

Expressed by the venom gland.

It localises to the secreted. In terms of biological role, probable neurotoxin that inhibits ion channels. Is toxic to mice. Is about 2.8% of the total protein in the venom. The sequence is that of Toxin Acra I-2 from Androctonus crassicauda (Arabian fat-tailed scorpion).